We begin with the raw amino-acid sequence, 330 residues long: MKTAYIAKQRQISFVKSHFSRQLEERLGLIEVQAPILSRVGDGTQDNLSGCEKAVQVKVKALPDAQFEVVHSLAKWKRQTLGQHDFSAGEGLYTHMKALRPDEDRLSPLHSVYVDQWDWERVMGDGERQFSTLKSTVEAIWAGIKATEAEVHKQFGLAPFLPEQIQFVHSQELLSRYPDLDAKGRERAIAKELGAVFLVGIGGKLSDGHRHDVRAPDYDDWSSASELGYAGLNGDILVWNPVLEDAFELSSMGIRVDADTLMRQLALTGDEDRLQLEWHQALLRGEMPQTIGGGIGQSRLTMLLLQLPHIGQVQCGVWPAQVRESIPAIL.

It belongs to the class-II aminoacyl-tRNA synthetase family. AsnA subfamily.

The protein localises to the cytoplasm. The enzyme catalyses L-aspartate + NH4(+) + ATP = L-asparagine + AMP + diphosphate + H(+). It participates in amino-acid biosynthesis; L-asparagine biosynthesis; L-asparagine from L-aspartate (ammonia route): step 1/1. The protein is Aspartate--ammonia ligase of Salmonella schwarzengrund (strain CVM19633).